Here is a 92-residue protein sequence, read N- to C-terminus: Small ribosomal subunit protein uS19 (92 aa).

The protein belongs to the universal ribosomal protein uS19 family.

Protein S19 forms a complex with S13 that binds strongly to the 16S ribosomal RNA. The protein is Small ribosomal subunit protein uS19 of Corynebacterium urealyticum (strain ATCC 43042 / DSM 7109).